The sequence spans 288 residues: NAD kinase (288 aa).

Asp-73 acts as the Proton acceptor in catalysis. NAD(+)-binding positions include Asp-73–Gly-74, Arg-78, Asn-144–Glu-145, Asp-174, Thr-185–Ser-190, and Ala-209.

This sequence belongs to the NAD kinase family. A divalent metal cation is required as a cofactor.

The protein localises to the cytoplasm. It carries out the reaction NAD(+) + ATP = ADP + NADP(+) + H(+). Functionally, involved in the regulation of the intracellular balance of NAD and NADP, and is a key enzyme in the biosynthesis of NADP. Catalyzes specifically the phosphorylation on 2'-hydroxyl of the adenosine moiety of NAD to yield NADP. The chain is NAD kinase from Porphyromonas gingivalis (strain ATCC 33277 / DSM 20709 / CIP 103683 / JCM 12257 / NCTC 11834 / 2561).